The sequence spans 823 residues: NAD-dependent histone deacetylase sirtuin-1 (823 aa).

Low complexity predominate over residues 41–67 (LASTSTEAEAEAEATATTTEPATSELA). The disordered stretch occupies residues 41–146 (LASTSTEAEA…SSSNCSSSVE (106 aa)). Over residues 72–95 (GEIKTKTLAAREEQEIGANLEHKT) the composition is skewed to basic and acidic residues. The segment covering 104–137 (EDEDDEEEEEEDDEEEEEDDEEGITGTSNEDEDS) has biased composition (acidic residues). The 296-residue stretch at 204 to 499 (KLASVNTFDD…LCCDESVLTE (296 aa)) folds into the Deacetylase sirtuin-type domain. NAD(+) contacts are provided by residues 229-248 (GAGVSVSCGIPDFRSTNGIY) and 313-316 (QNID). His-331 serves as the catalytic Proton acceptor. Cys-339, Cys-342, Cys-363, and Cys-366 together coordinate Zn(2+). NAD(+) is bound by residues 427–429 (GSS), 452–454 (NRE), and Ser-469. A phosphoserine mark is found at Ser-618 and Ser-621. Over residues 698–707 (DYSDDDDEEE) the composition is skewed to acidic residues. 2 disordered regions span residues 698–722 (DYSDDDDEEEERSHNRHSDLFGNVG) and 777–823 (IIEQ…LAAV). Positions 798 to 813 (PSEENKQQTQIERSEE) are enriched in basic and acidic residues. Residues 814-823 (SPPPGQLAAV) show a composition bias toward pro residues.

It belongs to the sirtuin family. Class I subfamily. Interacts with the transcriptional repressors hairy (hry) and deadpan (dpn); via basic domains. Associates with the Esc/E(z) histone methyltransferase complex. Interacts directly with E(z) and HDAC1/Rpd3. The cofactor is Zn(2+).

Its subcellular location is the cytoplasm. It localises to the nucleus. The protein resides in the chromosome. It carries out the reaction N(6)-acetyl-L-lysyl-[protein] + NAD(+) + H2O = 2''-O-acetyl-ADP-D-ribose + nicotinamide + L-lysyl-[protein]. In terms of biological role, NAD-dependent histone deacetylase involved in heterochromatic silencing. Mildly suppresses the heterochromatin-mediated silencing phenomenon known as position-effect variegation (PEV). Required for epigenetic silencing of the polycomb group proteins. Has histone H4 deacetylase activity in vitro. Required maternally for establishing proper segmentation of the embryo. Involved in sex determination. May be involved in the regulation of life span. This chain is NAD-dependent histone deacetylase sirtuin-1, found in Drosophila melanogaster (Fruit fly).